The following is a 328-amino-acid chain: Malate dehydrogenase (328 aa).

Position 11–17 (11–17 (GAAGQIG)) interacts with NAD(+). 2 residues coordinate substrate: Arg94 and Arg100. Residues Asn107, Gln114, and 131–133 (VGN) each bind NAD(+). 2 residues coordinate substrate: Asn133 and Arg164. His189 functions as the Proton acceptor in the catalytic mechanism.

This sequence belongs to the LDH/MDH superfamily. MDH type 2 family.

It carries out the reaction (S)-malate + NAD(+) = oxaloacetate + NADH + H(+). Catalyzes the reversible oxidation of malate to oxaloacetate. The protein is Malate dehydrogenase of Xanthomonas oryzae pv. oryzae (strain MAFF 311018).